Consider the following 166-residue polypeptide: MIDIAFSKLAIIGVAALVFIGPEKLPTVARMAGTLFGRAQRYINDVKSEVSREMELDELRKMHKDVQDAATDVERSIAQNISAADSSLHSAWDESDTDTNPLMEPPTLDQSSDKSKNFRKKKLAATSAVPSWYKRQSGQKSRVISGAARMAKFRPASARKSTPFFH.

A helical membrane pass occupies residues 1-21 (MIDIAFSKLAIIGVAALVFIG). The tract at residues 85–146 (DSSLHSAWDE…SGQKSRVISG (62 aa)) is disordered.

Belongs to the TatB family. As to quaternary structure, the Tat system comprises two distinct complexes: a TatABC complex, containing multiple copies of TatA, TatB and TatC subunits, and a separate TatA complex, containing only TatA subunits. Substrates initially bind to the TatABC complex, which probably triggers association of the separate TatA complex to form the active translocon.

The protein resides in the cell inner membrane. Its function is as follows. Part of the twin-arginine translocation (Tat) system that transports large folded proteins containing a characteristic twin-arginine motif in their signal peptide across membranes. Together with TatC, TatB is part of a receptor directly interacting with Tat signal peptides. TatB may form an oligomeric binding site that transiently accommodates folded Tat precursor proteins before their translocation. This chain is Sec-independent protein translocase protein TatB, found in Herminiimonas arsenicoxydans.